Consider the following 305-residue polypeptide: Oxygen-dependent coproporphyrinogen-III oxidase (305 aa).

Serine 98 lines the substrate pocket. The a divalent metal cation site is built by histidine 102 and histidine 112. Histidine 112 (proton donor) is an active-site residue. Residue 114–116 coordinates substrate; that stretch reads NVR. A divalent metal cation-binding residues include histidine 151 and histidine 181. The segment at 246-281 is important for dimerization; sequence YVEFNLVYDRGTLFGLQSGGRTESILMSMPPLARWE. Position 264–266 (264–266) interacts with substrate; that stretch reads GGR.

This sequence belongs to the aerobic coproporphyrinogen-III oxidase family. Homodimer. Requires a divalent metal cation as cofactor.

The protein resides in the cytoplasm. It carries out the reaction coproporphyrinogen III + O2 + 2 H(+) = protoporphyrinogen IX + 2 CO2 + 2 H2O. It participates in porphyrin-containing compound metabolism; protoporphyrin-IX biosynthesis; protoporphyrinogen-IX from coproporphyrinogen-III (O2 route): step 1/1. In terms of biological role, involved in the heme biosynthesis. Catalyzes the aerobic oxidative decarboxylation of propionate groups of rings A and B of coproporphyrinogen-III to yield the vinyl groups in protoporphyrinogen-IX. The protein is Oxygen-dependent coproporphyrinogen-III oxidase of Vibrio vulnificus (strain CMCP6).